The chain runs to 505 residues: Cysteine--tRNA ligase (505 aa).

Cys-33 contacts Zn(2+). A 'HIGH' region motif is present at residues 35 to 45 (PTVYDFAHIGN). Zn(2+)-binding residues include Cys-229, His-268, and Glu-272. The 'KMSKS' region signature appears at 301-305 (KMSKS). Position 304 (Lys-304) interacts with ATP.

The protein belongs to the class-I aminoacyl-tRNA synthetase family. In terms of assembly, monomer. Zn(2+) is required as a cofactor.

It localises to the cytoplasm. The catalysed reaction is tRNA(Cys) + L-cysteine + ATP = L-cysteinyl-tRNA(Cys) + AMP + diphosphate. The chain is Cysteine--tRNA ligase from Brucella anthropi (strain ATCC 49188 / DSM 6882 / CCUG 24695 / JCM 21032 / LMG 3331 / NBRC 15819 / NCTC 12168 / Alc 37) (Ochrobactrum anthropi).